Reading from the N-terminus, the 401-residue chain is Argininosuccinate synthase (401 aa).

9 to 17 is a binding site for ATP; it reads AYSGGLDTS. Residue Tyr86 participates in L-citrulline binding. Gly116 contacts ATP. Residues Thr118, Asn122, and Asp123 each coordinate L-aspartate. Position 122 (Asn122) interacts with L-citrulline. The L-citrulline site is built by Arg126, Ser174, Ser183, Glu259, and Tyr271.

It belongs to the argininosuccinate synthase family. Type 1 subfamily. In terms of assembly, homotetramer.

Its subcellular location is the cytoplasm. It catalyses the reaction L-citrulline + L-aspartate + ATP = 2-(N(omega)-L-arginino)succinate + AMP + diphosphate + H(+). It participates in amino-acid biosynthesis; L-arginine biosynthesis; L-arginine from L-ornithine and carbamoyl phosphate: step 2/3. This chain is Argininosuccinate synthase, found in Bacillus thuringiensis (strain Al Hakam).